The primary structure comprises 149 residues: Ribonuclease VapC2 (149 aa).

The PINc domain occupies 11–149; the sequence is IFFDSNILIY…RVDFLEIIEI (139 aa). Residues Asp-14 and Asp-116 each coordinate Mg(2+).

It belongs to the PINc/VapC protein family. It depends on Mg(2+) as a cofactor.

Toxic component of a type II toxin-antitoxin (TA) system. An RNase. Its cognate antitoxin is VapB2. The protein is Ribonuclease VapC2 of Methanocaldococcus jannaschii (strain ATCC 43067 / DSM 2661 / JAL-1 / JCM 10045 / NBRC 100440) (Methanococcus jannaschii).